Here is a 103-residue protein sequence, read N- to C-terminus: Nucleoid-associated protein SUN_2278 (103 aa).

The protein belongs to the YbaB/EbfC family. As to quaternary structure, homodimer.

Its subcellular location is the cytoplasm. It is found in the nucleoid. Its function is as follows. Binds to DNA and alters its conformation. May be involved in regulation of gene expression, nucleoid organization and DNA protection. The protein is Nucleoid-associated protein SUN_2278 of Sulfurovum sp. (strain NBC37-1).